A 67-amino-acid chain; its full sequence is Small ribosomal subunit protein eS17 (67 aa).

The protein belongs to the eukaryotic ribosomal protein eS17 family. Part of the 30S ribosomal subunit.

The sequence is that of Small ribosomal subunit protein eS17 from Thermococcus kodakarensis (strain ATCC BAA-918 / JCM 12380 / KOD1) (Pyrococcus kodakaraensis (strain KOD1)).